Reading from the N-terminus, the 407-residue chain is Arginine biosynthesis bifunctional protein ArgJ (407 aa).

Substrate is bound by residues threonine 154, lysine 180, threonine 191, glutamate 278, asparagine 402, and serine 407. Threonine 191 (nucleophile) is an active-site residue.

Belongs to the ArgJ family. As to quaternary structure, heterotetramer of two alpha and two beta chains.

It is found in the cytoplasm. The enzyme catalyses N(2)-acetyl-L-ornithine + L-glutamate = N-acetyl-L-glutamate + L-ornithine. It carries out the reaction L-glutamate + acetyl-CoA = N-acetyl-L-glutamate + CoA + H(+). It participates in amino-acid biosynthesis; L-arginine biosynthesis; L-ornithine and N-acetyl-L-glutamate from L-glutamate and N(2)-acetyl-L-ornithine (cyclic): step 1/1. Its pathway is amino-acid biosynthesis; L-arginine biosynthesis; N(2)-acetyl-L-ornithine from L-glutamate: step 1/4. Functionally, catalyzes two activities which are involved in the cyclic version of arginine biosynthesis: the synthesis of N-acetylglutamate from glutamate and acetyl-CoA as the acetyl donor, and of ornithine by transacetylation between N(2)-acetylornithine and glutamate. The chain is Arginine biosynthesis bifunctional protein ArgJ from Psychrobacter arcticus (strain DSM 17307 / VKM B-2377 / 273-4).